Consider the following 83-residue polypeptide: Small ribosomal subunit protein bS16 (83 aa).

The protein belongs to the bacterial ribosomal protein bS16 family.

The protein is Small ribosomal subunit protein bS16 of Pseudomonas putida (strain W619).